We begin with the raw amino-acid sequence, 261 residues long: Single-strand annealing weakened protein 1 (261 aa).

In terms of assembly, interacts with MSH2, MSH3, RAD1, RAD10, RAD51 and RAD52.

The protein resides in the nucleus. In terms of biological role, catalyzes 3'-non-homologous tail removal of RAD1/RAD10-dependent single-strand annealing recombination intermediates. Plays a key role in targeting RAD1/RAD10 complex to 3'-flap cleavage substrate in recombination. Also contributes to the integrity of ribosomal DNA arrays. This chain is Single-strand annealing weakened protein 1 (SAW1), found in Saccharomyces cerevisiae (strain ATCC 204508 / S288c) (Baker's yeast).